Consider the following 63-residue polypeptide: Large ribosomal subunit protein uL29 (63 aa).

It belongs to the universal ribosomal protein uL29 family.

This Baumannia cicadellinicola subsp. Homalodisca coagulata protein is Large ribosomal subunit protein uL29.